We begin with the raw amino-acid sequence, 339 residues long: Adenosine deaminase (339 aa).

Zn(2+) is bound by residues His-15 and His-17. 3 residues coordinate substrate: His-17, Asp-19, and Gly-172. Position 199 (His-199) interacts with Zn(2+). Glu-202 functions as the Proton donor in the catalytic mechanism. Asp-279 contacts Zn(2+).

The protein belongs to the metallo-dependent hydrolases superfamily. Adenosine and AMP deaminases family. Adenosine deaminase subfamily. Zn(2+) is required as a cofactor.

The enzyme catalyses adenosine + H2O + H(+) = inosine + NH4(+). It catalyses the reaction 2'-deoxyadenosine + H2O + H(+) = 2'-deoxyinosine + NH4(+). Catalyzes the hydrolytic deamination of adenosine and 2-deoxyadenosine. The sequence is that of Adenosine deaminase from Lacticaseibacillus casei (strain BL23) (Lactobacillus casei).